The following is a 189-amino-acid chain: Peptidyl-tRNA hydrolase (189 aa).

Y14 lines the tRNA pocket. The Proton acceptor role is filled by H19. TRNA is bound by residues Y64, N66, and N112.

The protein belongs to the PTH family. Monomer.

The protein resides in the cytoplasm. The enzyme catalyses an N-acyl-L-alpha-aminoacyl-tRNA + H2O = an N-acyl-L-amino acid + a tRNA + H(+). Functionally, hydrolyzes ribosome-free peptidyl-tRNAs (with 1 or more amino acids incorporated), which drop off the ribosome during protein synthesis, or as a result of ribosome stalling. Its function is as follows. Catalyzes the release of premature peptidyl moieties from peptidyl-tRNA molecules trapped in stalled 50S ribosomal subunits, and thus maintains levels of free tRNAs and 50S ribosomes. The protein is Peptidyl-tRNA hydrolase of Clostridium botulinum (strain Okra / Type B1).